A 241-amino-acid polypeptide reads, in one-letter code: MSLQAFRIGLLSTTAAPLAYARPFSSYAALLAKKKGKTSGKPGKADNEEPIEIIDVKKYVIDATKQFEKTLELHKRKLAEQKVGTASPTIFNDLRVGKEGQKFTELAATSLKGRNALIVTVFDPKDTKNIVSAIMAAGLNLNPERIPNNDQQLKVSLPPITTETRQAVCKDLKKVFEDYKHSALKESLGHVRGEIMKELKHLQKKNDDVKKVIQDVEKIHKEYTIKLQEQLKQAEKSVMNQ.

Belongs to the RRF family.

Its subcellular location is the mitochondrion. Its function is as follows. Necessary for protein synthesis in mitochondria. Functions as a ribosome recycling factor in mitochondria. The protein is Ribosome-recycling factor, mitochondrial (RRF1) of Kluyveromyces lactis (strain ATCC 8585 / CBS 2359 / DSM 70799 / NBRC 1267 / NRRL Y-1140 / WM37) (Yeast).